The primary structure comprises 76 residues: Large ribosomal subunit protein eL20 (76 aa).

This sequence belongs to the eukaryotic ribosomal protein eL20 family. Part of the 50S ribosomal subunit. Binds 23S rRNA.

This Methanocaldococcus jannaschii (strain ATCC 43067 / DSM 2661 / JAL-1 / JCM 10045 / NBRC 100440) (Methanococcus jannaschii) protein is Large ribosomal subunit protein eL20.